Consider the following 275-residue polypeptide: 3-methyl-2-oxobutanoate hydroxymethyltransferase (275 aa).

Positions 44 and 83 each coordinate Mg(2+). 3-methyl-2-oxobutanoate is bound by residues Asp44–Ser45, Asp83, and Lys113. Glu115 lines the Mg(2+) pocket. The active-site Proton acceptor is Glu182.

The protein belongs to the PanB family. In terms of assembly, homodecamer; pentamer of dimers. Mg(2+) is required as a cofactor.

The protein resides in the cytoplasm. The catalysed reaction is 3-methyl-2-oxobutanoate + (6R)-5,10-methylene-5,6,7,8-tetrahydrofolate + H2O = 2-dehydropantoate + (6S)-5,6,7,8-tetrahydrofolate. Its pathway is cofactor biosynthesis; (R)-pantothenate biosynthesis; (R)-pantoate from 3-methyl-2-oxobutanoate: step 1/2. In terms of biological role, catalyzes the reversible reaction in which hydroxymethyl group from 5,10-methylenetetrahydrofolate is transferred onto alpha-ketoisovalerate to form ketopantoate. This Clostridium botulinum (strain Kyoto / Type A2) protein is 3-methyl-2-oxobutanoate hydroxymethyltransferase.